The following is a 122-amino-acid chain: Ribosome-binding factor A (122 aa).

This sequence belongs to the RbfA family. Monomer. Binds 30S ribosomal subunits, but not 50S ribosomal subunits or 70S ribosomes.

The protein localises to the cytoplasm. One of several proteins that assist in the late maturation steps of the functional core of the 30S ribosomal subunit. Associates with free 30S ribosomal subunits (but not with 30S subunits that are part of 70S ribosomes or polysomes). Required for efficient processing of 16S rRNA. May interact with the 5'-terminal helix region of 16S rRNA. This is Ribosome-binding factor A from Pelagibacter ubique (strain HTCC1062).